The following is a 435-amino-acid chain: Serine carboxypeptidase-like 14 (435 aa).

An N-terminal signal peptide occupies residues 1-23 (MGSWIPKLLLLQLVLLLTKHADS). 3 cysteine pairs are disulfide-bonded: Cys82/Cys325, Cys246/Cys260, and Cys284/Cys291. Asn103 carries an N-linked (GlcNAc...) asparagine glycan. The active site involves Ser178. A glycan (N-linked (GlcNAc...) asparagine) is linked at Asn344. Residue Asp360 is part of the active site. Asn376 carries N-linked (GlcNAc...) asparagine glycosylation. Residue His413 is part of the active site.

It belongs to the peptidase S10 family. As to expression, expressed in senescent leaves.

The protein resides in the secreted. Functionally, probable carboxypeptidase. The polypeptide is Serine carboxypeptidase-like 14 (SCPL14) (Arabidopsis thaliana (Mouse-ear cress)).